A 319-amino-acid chain; its full sequence is Cytochrome c biogenesis protein CcsA (319 aa).

The next 5 membrane-spanning stretches (helical) occupy residues 14–34 (AFAV…FPQW), 46–66 (AIAN…GGYF), 74–94 (SLFF…SISG), 97–117 (LVGV…ALSL), and 142–162 (VMML…ALLV). A disordered region spans residues 175 to 201 (SVGTGSFRSRRPEPSLEASTGNGGTTV). Positions 191–201 (EASTGNGGTTV) are enriched in polar residues. 3 helical membrane-spanning segments follow: residues 227–247 (MIGL…VWAN), 254–274 (WSWD…AAYL), and 288–308 (AILA…VNLL).

The protein belongs to the CcmF/CycK/Ccl1/NrfE/CcsA family. In terms of assembly, may interact with ccs1.

The protein localises to the cellular thylakoid membrane. Required during biogenesis of c-type cytochromes (cytochrome c6 and cytochrome f) at the step of heme attachment. This chain is Cytochrome c biogenesis protein CcsA, found in Thermosynechococcus vestitus (strain NIES-2133 / IAM M-273 / BP-1).